The primary structure comprises 233 residues: Ribose-5-phosphate isomerase A (233 aa).

Substrate is bound by residues T28–T31, D83–D86, and K96–G99. The active-site Proton acceptor is the E105. Residue K123 coordinates substrate.

Belongs to the ribose 5-phosphate isomerase family. As to quaternary structure, homodimer.

It carries out the reaction aldehydo-D-ribose 5-phosphate = D-ribulose 5-phosphate. The protein operates within carbohydrate degradation; pentose phosphate pathway; D-ribose 5-phosphate from D-ribulose 5-phosphate (non-oxidative stage): step 1/1. Catalyzes the reversible conversion of ribose-5-phosphate to ribulose 5-phosphate. This is Ribose-5-phosphate isomerase A from Rhizobium rhizogenes (strain K84 / ATCC BAA-868) (Agrobacterium radiobacter).